Here is a 22-residue protein sequence, read N- to C-terminus: Large ribosomal subunit protein bL32 (22 aa).

The tract at residues 1-22 is disordered; sequence CVQQNKKSRSARDMXXSXDALE. The span at 13-22 shows a compositional bias: low complexity; that stretch reads DMXXSXDALE.

It belongs to the bacterial ribosomal protein bL32 family.

This chain is Large ribosomal subunit protein bL32 (rpmF), found in Ectopseudomonas mendocina (Pseudomonas mendocina).